A 103-amino-acid polypeptide reads, in one-letter code: Carboxysome shell protein CcmK3 (103 aa).

Positions 4–91 (AVGVIQTLGF…PPENVLAVLP (88 aa)) constitute a BMC domain.

Belongs to the bacterial microcompartments protein family. CcmK subfamily. As to quaternary structure, forms mixed heterohexamers with CcmK4, probably with 1:5 CcmK3:CcmK4 stoichiometry. Only very weak interactions with CcmK1 and CcmK2 were seen. Bulky residues in the pore region probably preclude the formation of homohexamers by this subunit.

It is found in the carboxysome. A probably minor shell protein component of the carboxysome, a polyhedral inclusion where RuBisCO (ribulose bisphosphate carboxylase, rbcL-rbcS) is sequestered. This subunit probably does not form homohexamers. The sequence is that of Carboxysome shell protein CcmK3 from Synechocystis sp. (strain ATCC 27184 / PCC 6803 / Kazusa).